Here is a 256-residue protein sequence, read N- to C-terminus: Nuclear shuttle protein (256 aa).

Positions 21 to 42 (NSLIRQQSLFKRNVSKRRPFQT) match the Bipartite nuclear localization signal motif. A Nuclear localization signal motif is present at residues 81-96 (DIAKSLPNRTRSYIKL). Residues 150–187 (ELFGARIHSHGNLAIVPSLKDRFYIRHVLKRVISVEKD) are interaction with Arabidopsis thaliana NSI protein.

It belongs to the begomovirus nuclear shuttle protein family. As to quaternary structure, binds to single-stranded and double-stranded viral DNA. Interacts with the host nuclear shuttle interacting (NSI) protein. This interaction may allow NSP to recruit NSI monomers to the viral genome and thus regulate nuclear export of viral genome by NSP.

The protein resides in the host nucleus. It localises to the host cytoplasm. Its subcellular location is the host cell membrane. Binds to the genomic viral ssDNA, shuttles it into and out of the cell nucleus. Begomoviruses use 2 proteins to transport their DNA from cell to cell. The nuclear shuttle protein (NSP) shuttles it between nucleus and cytoplasm and the movement protein (MP) probably transports the DNA-NSP complex to the cell periphery and facilitates movement across the cell wall. This Potato yellow mosaic virus (isolate Venezuela) (PYMV) protein is Nuclear shuttle protein.